Consider the following 320-residue polypeptide: Malate dehydrogenase (320 aa).

Residues 10–15 and Asp-34 contribute to the NAD(+) site; that span reads GSGMIG. Substrate is bound by residues Arg-83 and Arg-89. NAD(+) contacts are provided by residues Asn-96 and 119-121; that span reads ITN. Positions 121 and 152 each coordinate substrate. His-176 functions as the Proton acceptor in the catalytic mechanism.

This sequence belongs to the LDH/MDH superfamily. MDH type 3 family.

It catalyses the reaction (S)-malate + NAD(+) = oxaloacetate + NADH + H(+). Functionally, catalyzes the reversible oxidation of malate to oxaloacetate. This chain is Malate dehydrogenase, found in Rhizobium etli (strain CIAT 652).